We begin with the raw amino-acid sequence, 879 residues long: MKMLTRLQVLTLALFSKGFLLSLGDHNFLRREIKIEGDLVLGGLFPINEKGTGTEECGRINEDRGIQRLEAMLFAIDEINKDDYLLPGVKLGVHILDTCSRDTYALEQSLEFVRASLTKVDEAEYMCPDGSYAIQENIPLLIAGVIGGSYSSVSIQVANLLRLFQIPQISYASTSAKLSDKSRYDYFARTVPPDFYQAKAMAEILRFFNWTYVSTVASEGDYGETGIEAFEQEARLRNICIATAEKVGRSNIRKSYDSVIRELLQKPNARVVVLFMRSDDSRELIAAASRANASFTWVASDGWGAQESIIKGSEHVAYGAITLELASQPVRQFDRYFQSLNPYNNHRNPWFRDFWEQKFQCSLQNKRNHRRVCDKHLAIDSSNYEQESKIMFVVNAVYAMAHALHKMQRTLCPNTTKLCDAMKILDGKKLYKDYLLKINFTAPFNPNKDADSIVKFDTFGDGMGRYNVFNFQNVGGKYSYLKVGHWAETLSLDVNSIHWSRNSVPTSQCSDPCAPNEMKNMQPGDVCCWICIPCEPYEYLADEFTCMDCGSGQWPTADLTGCYDLPEDYIRWEDAWAIGPVTIACLGFMCTCMVVTVFIKHNNTPLVKASGRELCYILLFGVGLSYCMTFFFIAKPSPVICALRRLGLGSSFAICYSALLTKTNCIARIFDGVKNGAQRPKFISPSSQVFICLGLILVQIVMVSVWLILEAPGTRRYTLAEKRETVILKCNVKDSSMLISLTYDVILVILCTVYAFKTRKCPENFNEAKFIGFTMYTTCIIWLAFLPIFYVTSSDYRVQTTTMCISVSLSGFVVLGCLFAPKVHIILFQPQKNVVTHRLHLNRFSVSGTGTTYSQSSASTYVPTVCNGREVLDSTTSSL.

A signal peptide spans 1–22; it reads MKMLTRLQVLTLALFSKGFLLS. Over 23–576 the chain is Extracellular; sequence LGDHNFLRRE…EDYIRWEDAW (554 aa). An intrachain disulfide couples Cys-57 to Cys-99. Residues Ser-151 and 172–174 contribute to the L-glutamate site; that span reads AST. Asn-209 is a glycosylation site (N-linked (GlcNAc...) asparagine). Tyr-222 serves as a coordination point for L-glutamate. Disulfide bonds link Cys-240/Cys-527, Cys-361/Cys-373, Cys-412/Cys-419, Cys-509/Cys-528, Cys-513/Cys-531, Cys-534/Cys-546, and Cys-549/Cys-562. N-linked (GlcNAc...) asparagine glycosylation occurs at Asn-292. Asp-301 contributes to the L-glutamate binding site. Residue Lys-389 coordinates L-glutamate. 2 N-linked (GlcNAc...) asparagine glycosylation sites follow: Asn-414 and Asn-439. Residues 577–599 form a helical membrane-spanning segment; sequence AIGPVTIACLGFMCTCMVVTVFI. The Cytoplasmic portion of the chain corresponds to 600 to 613; sequence KHNNTPLVKASGRE. The helical transmembrane segment at 614–634 threads the bilayer; it reads LCYILLFGVGLSYCMTFFFIA. Residues 635–645 are Extracellular-facing; that stretch reads KPSPVICALRR. A helical transmembrane segment spans residues 646–664; the sequence is LGLGSSFAICYSALLTKTN. The Cytoplasmic segment spans residues 665–688; the sequence is CIARIFDGVKNGAQRPKFISPSSQ. A helical transmembrane segment spans residues 689 to 709; the sequence is VFICLGLILVQIVMVSVWLIL. At 710-734 the chain is on the extracellular side; the sequence is EAPGTRRYTLAEKRETVILKCNVKD. The helical transmembrane segment at 735 to 756 threads the bilayer; sequence SSMLISLTYDVILVILCTVYAF. The Cytoplasmic segment spans residues 757 to 769; sequence KTRKCPENFNEAK. A helical membrane pass occupies residues 770 to 792; sequence FIGFTMYTTCIIWLAFLPIFYVT. Over 793–802 the chain is Extracellular; the sequence is SSDYRVQTTT. Residues 803–828 form a helical membrane-spanning segment; it reads MCISVSLSGFVVLGCLFAPKVHIILF. The Cytoplasmic portion of the chain corresponds to 829–879; sequence QPQKNVVTHRLHLNRFSVSGTGTTYSQSSASTYVPTVCNGREVLDSTTSSL.

This sequence belongs to the G-protein coupled receptor 3 family. Interacts with TAMALIN. In terms of tissue distribution, detected in brain cortex, thalamus, subthalamic nucleus, substantia nigra, hypothalamus, hippocampus, corpus callosum, caudate nucleus and amygdala.

It localises to the cell membrane. G-protein coupled receptor for glutamate. Ligand binding causes a conformation change that triggers signaling via guanine nucleotide-binding proteins (G proteins) and modulates the activity of down-stream effectors. Signaling inhibits adenylate cyclase activity. The polypeptide is Metabotropic glutamate receptor 3 (GRM3) (Homo sapiens (Human)).